We begin with the raw amino-acid sequence, 152 residues long: Protein SprT-like (152 aa).

The SprT-like domain occupies 9–149 (LQKLTETISL…CGKCNGKLKE (141 aa)). Zn(2+) is bound at residue His70. Glu71 is an active-site residue. His74 serves as a coordination point for Zn(2+).

The protein belongs to the SprT family. The cofactor is Zn(2+).

The protein resides in the cytoplasm. The polypeptide is Protein SprT-like (Staphylococcus saprophyticus subsp. saprophyticus (strain ATCC 15305 / DSM 20229 / NCIMB 8711 / NCTC 7292 / S-41)).